A 583-amino-acid chain; its full sequence is Glucosidase 2 subunit beta (583 aa).

The signal sequence occupies residues 1–26 (MVRLNLAVVALAAGALSASASASSSA). Cys91 and Cys115 are joined by a disulfide. Residues 130–252 (NRCEKVGKEY…LTLLLDDLAK (123 aa)) adopt a coiled-coil conformation. An MRH domain is found at 455 to 562 (NKCFSKDMGE…KVATPAVCFP (108 aa)). 3 disulfide bridges follow: Cys457-Cys470, Cys519-Cys548, and Cys533-Cys560. A Prevents secretion from ER motif is present at residues 580–583 (KDEL).

As to quaternary structure, heterodimer of a catalytic subunit alpha and a subunit beta.

It is found in the endoplasmic reticulum. Its function is as follows. Subunit of glucosidase 2, which cleaves sequentially the 2 innermost alpha-1,3-linked glucose residues from the Glc(2)Man(9)GlcNAc(2) oligosaccharide precursor of immature glycoproteins in the endoplasmic reticulum (ER). Specifically required for the cleavage of the final glucose. The subunit beta retains the catalytic subunit alpha in the ER. The chain is Glucosidase 2 subunit beta from Mycosarcoma maydis (Corn smut fungus).